A 146-amino-acid polypeptide reads, in one-letter code: Aspartate carbamoyltransferase regulatory chain (146 aa).

Residues Cys-102, Cys-107, Cys-131, and Cys-134 each coordinate Zn(2+).

The protein belongs to the PyrI family. In terms of assembly, contains catalytic and regulatory chains. Zn(2+) is required as a cofactor.

Functionally, involved in allosteric regulation of aspartate carbamoyltransferase. This is Aspartate carbamoyltransferase regulatory chain from Clostridium botulinum (strain Okra / Type B1).